Here is a 1150-residue protein sequence, read N- to C-terminus: C5a peptidase (1150 aa).

The signal sequence occupies residues 1–31 (MRKKQKLPFDKLAIALMSTSILLNAQSDIKA). The interval 33–73 (TVTEDTPAAEQAVETPQPTAVSEEVPSSKETKTPQTPDNAE) is disordered. The Peptidase S8 domain occupies 99–581 (KATIRDLNDP…AGAVDAKKAS (483 aa)). Active-site charge relay system residues include Asp130, His193, and Ser512. 2 stretches are compositionally biased toward basic and acidic residues: residues 1029 to 1054 (EGHSNKPEQDGSDQAPDKKPEAKPEQ) and 1061 to 1073 (PDKKPETKPEKDS). A disordered region spans residues 1029–1116 (EGHSNKPEQD…RDQLPTTNDK (88 aa)). 3 repeat units span residues 1034 to 1050 (KPEQDGSDQAPDKKPEA), 1051 to 1067 (KPEQDGSGQTPDKKPET), and 1068 to 1084 (KPEKDSSGQTPGKTPQK). The segment at 1034–1084 (KPEQDGSDQAPDKKPEAKPEQDGSGQTPDKKPETKPEKDSSGQTPGKTPQK) is 3 X 17 AA tandem repeats. A compositionally biased stretch (polar residues) spans 1075 to 1089 (GQTPGKTPQKGQPSR). The LPXTG sorting signal motif lies at 1110 to 1114 (LPTTN). Pentaglycyl murein peptidoglycan amidated threonine is present on Thr1113. Residues 1114–1150 (NDKDTNRLHLLKLVMTTFFFGLVAHIFKTKRQKETKK) constitute a propeptide, removed by sortase.

Belongs to the peptidase S8 family. In terms of processing, cleaved by SpeB protease; leading to its degradation. Degradation by SpeB is probably strictly regulated to preserve integrity of C5a peptidase.

The protein localises to the secreted. The protein resides in the cell wall. It carries out the reaction The primary cleavage site is at 67-His-|-Lys-68 in human C5a with a minor secondary cleavage site at 58-Ala-|-Ser-59.. Functionally, this virulence factor of S.pyogenes specifically cleaves the human serum chemotaxin C5a at '68-Lys-|-Asp-69' bond near its C-terminus, destroying its ability to serve as a chemoattractant. This is C5a peptidase (scpA) from Streptococcus pyogenes serotype M18 (strain MGAS8232).